The following is a 508-amino-acid chain: Lysine--tRNA ligase (508 aa).

Glu-418 and Glu-425 together coordinate Mg(2+).

Belongs to the class-II aminoacyl-tRNA synthetase family. Homodimer. It depends on Mg(2+) as a cofactor.

It is found in the cytoplasm. It carries out the reaction tRNA(Lys) + L-lysine + ATP = L-lysyl-tRNA(Lys) + AMP + diphosphate. The chain is Lysine--tRNA ligase from Burkholderia vietnamiensis (strain G4 / LMG 22486) (Burkholderia cepacia (strain R1808)).